Here is a 337-residue protein sequence, read N- to C-terminus: MKIYYEHDADLGFILGKKVAVLGFGSQGHAHALNLKDSGVDVRVGLRKGSRSWEKAEAAGLRVLPVAEAVREADVVMVLLPDEKQAQVYREEVEPNLKEGGALAFAHGFNVHFGQIKPRKDLDVWMVAPKGPGHLVRSEYQKGSGVPALVAVHQDASGSAFPTALAYAKAIGAARAGVIATTFKDETETDLFGEQAVLCGGLTRLIRAGFETLVEAGYPPEMAYFETVHEVKLIVDLIYEAGLKGMRYSISNTAEYGDYTRGDLAVPLEETKRRMREILRQIQSGEFAREWMLENQVGSPVLEANRKRWAAHPIEEVGSRLRAMMPFLKARVMEEVG.

The region spanning 1–181 is the KARI N-terminal Rossmann domain; the sequence is MKIYYEHDAD…GAARAGVIAT (181 aa). NADP(+)-binding positions include 24-27, Arg47, Ser50, Ser52, and 82-85; these read FGSQ and DEKQ. Residue His107 is part of the active site. Gly133 serves as a coordination point for NADP(+). In terms of domain architecture, KARI C-terminal knotted spans 182-328; that stretch reads TFKDETETDL…SRLRAMMPFL (147 aa). Residues Asp190, Glu194, Glu226, and Glu230 each coordinate Mg(2+). Ser251 is a substrate binding site.

The protein belongs to the ketol-acid reductoisomerase family. The cofactor is Mg(2+).

It catalyses the reaction (2R)-2,3-dihydroxy-3-methylbutanoate + NADP(+) = (2S)-2-acetolactate + NADPH + H(+). The catalysed reaction is (2R,3R)-2,3-dihydroxy-3-methylpentanoate + NADP(+) = (S)-2-ethyl-2-hydroxy-3-oxobutanoate + NADPH + H(+). The protein operates within amino-acid biosynthesis; L-isoleucine biosynthesis; L-isoleucine from 2-oxobutanoate: step 2/4. Its pathway is amino-acid biosynthesis; L-valine biosynthesis; L-valine from pyruvate: step 2/4. Involved in the biosynthesis of branched-chain amino acids (BCAA). Catalyzes an alkyl-migration followed by a ketol-acid reduction of (S)-2-acetolactate (S2AL) to yield (R)-2,3-dihydroxy-isovalerate. In the isomerase reaction, S2AL is rearranged via a Mg-dependent methyl migration to produce 3-hydroxy-3-methyl-2-ketobutyrate (HMKB). In the reductase reaction, this 2-ketoacid undergoes a metal-dependent reduction by NADPH to yield (R)-2,3-dihydroxy-isovalerate. The sequence is that of Ketol-acid reductoisomerase (NADP(+)) from Thermus thermophilus (strain ATCC BAA-163 / DSM 7039 / HB27).